We begin with the raw amino-acid sequence, 439 residues long: GTPase Der (439 aa).

EngA-type G domains lie at 4–168 and 177–352; these read PIVA…KDDE and INIA…DNYT. GTP contacts are provided by residues 10–17, 57–61, 120–123, 183–190, 230–234, and 295–298; these read GRPNVGKS, DTGGI, NKID, GKPNVGKS, DTAGL, and NKWD. The KH-like domain maps to 353 to 437; sequence KRVKTGVLND…GIKLEFRERK (85 aa).

It belongs to the TRAFAC class TrmE-Era-EngA-EngB-Septin-like GTPase superfamily. EngA (Der) GTPase family. Associates with the 50S ribosomal subunit.

Functionally, GTPase that plays an essential role in the late steps of ribosome biogenesis. The chain is GTPase Der from Clostridium botulinum (strain Langeland / NCTC 10281 / Type F).